A 240-amino-acid chain; its full sequence is DUP240 protein DFP1 (240 aa).

A disordered region spans residues M1 to E29. Transmembrane regions (helical) follow at residues I61–F81 and V84–I104.

It belongs to the DUP/COS family.

The protein localises to the membrane. This chain is DUP240 protein DFP1, found in Saccharomyces cerevisiae (Baker's yeast).